The primary structure comprises 383 residues: MEEKENVNLVEKSNYVALENTREIDVFDEFLNAIGNENTITPVYADSSLTHLRKKSYTKVVHDCTYALVINPYDKKVIWRRGLAYLRLGHPHLANRDWEHSLELDPNNTYIQKSLHRLKEVYYIYRECAETWQLRHLRVASSQQLPVGLRKQYPNIIRGKIWWKKVHDNCQLCGQQCELKKENLSAMRSMLYMANTYAKDDTENHSPSAQIGIESSEDELENKITKGEHSLLVPEELYRSNYPCPQNIDQFLYMIKVLSAPCLYIETFSFPISTINQLFKAHGMSVEQLNLFLKSIHYIGLCSRFCKQWSDKARSLMQALSGLPWFSFVVQHCLHITAAQILLHIPDIQEEEFRNWHVSKKPINNTDLSSEFEIAEIPINCYT.

The TPR repeat unit spans residues 75–108 (KKVIWRRGLAYLRLGHPHLANRDWEHSLELDPNN).

Its subcellular location is the cytoplasm. The protein localises to the nucleus. Functionally, has a role in meiosis. The chain is Meiotically up-regulated gene 93 protein (mug93) from Schizosaccharomyces pombe (strain 972 / ATCC 24843) (Fission yeast).